The primary structure comprises 758 residues: MGTVEQKSTHTSPPTSPISRARSISGSIKSLFKPSSVQNSTPTVSPHESSPPLGNSDNLKKLVDTKRAELSSSRGAPPVNVNNVSNLSINTDVRPADDQPQVKSAKSPIIQTPKMAMNIVPQNIKSVLSSPRQSSSTNDRSSITSATSSVTSANDQKEKNYGSGNGSADDIPIAQLRLSEQDRAQDYTIDNALDTKDKSKPVKRNNSTSAFRGRKDKNFESSEYEIRSNSLSRIHSTPQNESPTVNNIHRGRPYSESISISSLKHIEQESKCILQVDNFKVFENGMHVHNLKIMPIVKSAQADAANDHDSNELNKQKSMFSLTSIFKSHKEDSGVDNSPLENLDNAVSLLPSIKNMAVYNRKRNISSSTAGTGGSDSDSIPDDLSERMVNPCAAIGAEELKLINTLSERINDAILCKSGKKSSHMLKEKDPDAMTFTQLYGKSMGVVLGHGAYGVVRLFSRNATERDPQYLQTYCNGQKMFFAVKELKPKSSEPKEKFSTRITSEFIIGHSLNHSEKKGGSKYSPNIIRVLDLLEISSGSFIEVLEFCPSGDLYNILTRKTKNGTALHPLEADCFMKQLLTGVQYMHSHGVAHCDLKPENILFHPNGLLKICDFGTSCVFQTAWEKNVHFQTGAVGSEPYVAPEEFIHDFNYDPRLVDCWSCGVVYCSMVLGHYLWKLAVKEKDPLYKAFYEEISSNKEFYVFEEMRHVNHEINRLRKISLYKIFQPNPDKRITIDQLLQSPWMKNTRCCIDYKTISS.

Disordered regions lie at residues Met1–Asp170 and Ile189–Arg252. Residues Arg22–Asp57 are compositionally biased toward polar residues. Over residues Asn58–Glu69 the composition is skewed to basic and acidic residues. Residues Ser129–Ala153 show a composition bias toward low complexity. Over residues Asp216–Ile226 the composition is skewed to basic and acidic residues. Residues Arg227–Asn247 are compositionally biased toward polar residues. The Protein kinase domain maps to Lys442 to Met744. Residues Leu448 to Val456 and Lys485 contribute to the ATP site. Asp595 functions as the Proton acceptor in the catalytic mechanism.

Belongs to the protein kinase superfamily. CAMK Ser/Thr protein kinase family. NPR/HAL subfamily. HAL5 sub-subfamily.

The enzyme catalyses L-seryl-[protein] + ATP = O-phospho-L-seryl-[protein] + ADP + H(+). It catalyses the reaction L-threonyl-[protein] + ATP = O-phospho-L-threonyl-[protein] + ADP + H(+). The chain is Probable serine/threonine-protein kinase HAL5-like from Vanderwaltozyma polyspora (strain ATCC 22028 / DSM 70294 / BCRC 21397 / CBS 2163 / NBRC 10782 / NRRL Y-8283 / UCD 57-17) (Kluyveromyces polysporus).